Here is a 352-residue protein sequence, read N- to C-terminus: Cell division protein ZipA (352 aa).

The Periplasmic segment spans residues 1 to 6 (MKDLQL). A helical membrane pass occupies residues 7-27 (VLFVLGAIAIIAVLVHGFWSI). Residues 28 to 352 (RKQQPKSMKQ…KDYLRRLNAA (325 aa)) lie on the Cytoplasmic side of the membrane. 2 disordered regions span residues 78–120 (KPVL…HVEP) and 138–160 (PAPTASTSMNTPKKIFNPSTSTA). Polar residues predominate over residues 83–105 (TNLSQKPHSGTTKLTDTPLQDSL). The segment covering 111–120 (HKTEPEHVEP) has biased composition (basic and acidic residues). The span at 141–160 (TASTSMNTPKKIFNPSTSTA) shows a compositional bias: polar residues.

This sequence belongs to the ZipA family. In terms of assembly, interacts with FtsZ via their C-terminal domains.

The protein resides in the cell inner membrane. Essential cell division protein that stabilizes the FtsZ protofilaments by cross-linking them and that serves as a cytoplasmic membrane anchor for the Z ring. Also required for the recruitment to the septal ring of downstream cell division proteins. This Shewanella frigidimarina (strain NCIMB 400) protein is Cell division protein ZipA.